The following is a 320-amino-acid chain: Protein TsetseEP (320 aa).

The N-terminal stretch at 1 to 19 (MKFFISFAFLCLVLSCVAA) is a signal peptide. Residues 192 to 320 (GLPEPEPEPE…ESKPNSLFNF (129 aa)) are disordered. The segment covering 194–308 (PEPEPEPEPE…EPEPEPEPQP (115 aa)) has biased composition (acidic residues). Residues 194-311 (PEPEPEPEPE…PEPEPQPEPE (118 aa)) form a 59 X 2 AA tandem repeats of P-E region.

As to expression, expressed in the gut, but not salivary glands, of female and male flies (at protein level). Present in vesicles in midgut cells and in the lumen of the gut.

It is found in the secreted. The sequence is that of Protein TsetseEP from Glossina morsitans morsitans (Savannah tsetse fly).